The following is a 145-amino-acid chain: Superoxide dismutase [Mn/Fe] (145 aa).

Residues H10 and H64 each contribute to the Fe(3+) site. Mn(2+) is bound by residues H10 and H64.

It belongs to the iron/manganese superoxide dismutase family. It depends on Mn(2+) as a cofactor. The cofactor is Fe(3+).

It carries out the reaction 2 superoxide + 2 H(+) = H2O2 + O2. Functionally, destroys superoxide anion radicals which are normally produced within the cells and which are toxic to biological systems. Catalyzes the dismutation of superoxide anion radicals into O2 and H2O2 by successive reduction and oxidation of the transition metal ion at the active site. The sequence is that of Superoxide dismutase [Mn/Fe] (sodA) from Streptococcus porcinus.